The sequence spans 310 residues: Porphobilinogen deaminase (310 aa).

The residue at position 243 (cysteine 243) is an S-(dipyrrolylmethanemethyl)cysteine.

The protein belongs to the HMBS family. In terms of assembly, monomer. Dipyrromethane is required as a cofactor.

It carries out the reaction 4 porphobilinogen + H2O = hydroxymethylbilane + 4 NH4(+). Its pathway is porphyrin-containing compound metabolism; protoporphyrin-IX biosynthesis; coproporphyrinogen-III from 5-aminolevulinate: step 2/4. Its function is as follows. Tetrapolymerization of the monopyrrole PBG into the hydroxymethylbilane pre-uroporphyrinogen in several discrete steps. This is Porphobilinogen deaminase from Mannheimia succiniciproducens (strain KCTC 0769BP / MBEL55E).